The sequence spans 387 residues: Protein disulfide isomerase pTAC5, chloroplastic (387 aa).

Residues 1-40 constitute a chloroplast transit peptide; sequence MASSSLPLSLPFPLRSLTSTTRSLPFQCSPLFFSIPSSIV. 2 coiled-coil regions span residues 72 to 106 and 143 to 163; these read EQRWIRERESLLQEISDLQLRIQSLESRNSQLGNS and REQIVEEVEEEEKRVIIAEEK. The segment at 318–387 adopts a CR-type zinc-finger fold; it reads PVDRSESTNT…CDVCDGKKNL (70 aa).

In terms of assembly, interacts with HSP21; the formed complex associates with the plastid-encoded RNA polymerase (PEP) complex not only during transcription initiation, but also during elongation and termination, and with a stronger efficiency in illuminated chloroplasts. Binds to promoter regions of PEP-dependent genes, especially after a heat stress. Interacts with FLN2.

The protein localises to the plastid. It localises to the chloroplast stroma. The protein resides in the chloroplast nucleoid. The catalysed reaction is Catalyzes the rearrangement of -S-S- bonds in proteins.. Functionally, exhibits zinc-dependent disulfide isomerase activity. Required for seedling and chloroplast development under heat stress, probably by maintaining plastid-encoded RNA polymerase (PEP)-dependent transcription. This Arabidopsis thaliana (Mouse-ear cress) protein is Protein disulfide isomerase pTAC5, chloroplastic.